The sequence spans 456 residues: Septin-10 (456 aa).

In terms of domain architecture, Septin-type G spans 40–306 (QGFCFNILCV…ELYRRCKLQE (267 aa)). Residues 50-57 (GETGIGKS) form a G1 motif region. Residues 50-57 (GETGIGKS), Gly-105, 186-194 (KADTISKSE), Gly-240, and Arg-255 contribute to the GTP site. A G3 motif region spans residues 102-105 (NTVG). Positions 185–188 (AKAD) are G4 motif. Residue Ser-418 is modified to Phosphoserine.

This sequence belongs to the TRAFAC class TrmE-Era-EngA-EngB-Septin-like GTPase superfamily. Septin GTPase family. In terms of assembly, septins polymerize into heterooligomeric protein complexes that form filaments, and can associate with cellular membranes, actin filaments and microtubules. GTPase activity is required for filament formation. Interacts with ADGB. Post-translationally, proteolytically cleaved in vitro in a calmodulin-dependent manner.

Its subcellular location is the cytoplasm. The protein localises to the cytoskeleton. It is found in the cell projection. The protein resides in the cilium. It localises to the flagellum. Filament-forming cytoskeletal GTPase. May play a role in cytokinesis (Potential). This is Septin-10 from Rattus norvegicus (Rat).